The following is a 351-amino-acid chain: D-threonate 4-phosphate dehydrogenase (351 aa).

Substrate-binding residues include His147 and Thr148. 3 residues coordinate a divalent metal cation: His177, His221, and His276. Substrate-binding residues include Lys284, Asn293, and Arg302.

The protein belongs to the PdxA family. PdxA2 subfamily. In terms of assembly, homodimer. Requires a divalent metal cation as cofactor.

The catalysed reaction is 4-O-phospho-D-threonate + NAD(+) = dihydroxyacetone phosphate + CO2 + NADH. Its function is as follows. Catalyzes the NAD-dependent oxidation and subsequent decarboxylation of D-threonate 4-phosphate to produce dihydroxyacetone phosphate (DHAP). Can also use 4-hydroxy-L-threonine 4-phosphate as substrate. This is D-threonate 4-phosphate dehydrogenase from Bordetella bronchiseptica (strain ATCC BAA-588 / NCTC 13252 / RB50) (Alcaligenes bronchisepticus).